The sequence spans 357 residues: Sulfate/thiosulfate import ATP-binding protein CysA (357 aa).

The ABC transporter domain maps to 3–237; sequence IQIQGVSKQY…PASPFVYDFL (235 aa). 35-42 lines the ATP pocket; that stretch reads GPSGSGKT.

This sequence belongs to the ABC transporter superfamily. Sulfate/tungstate importer (TC 3.A.1.6) family. As to quaternary structure, the complex is composed of two ATP-binding proteins (CysA), two transmembrane proteins (CysT and CysW) and a solute-binding protein (CysP).

The protein resides in the cell membrane. It carries out the reaction sulfate(out) + ATP + H2O = sulfate(in) + ADP + phosphate + H(+). It catalyses the reaction thiosulfate(out) + ATP + H2O = thiosulfate(in) + ADP + phosphate + H(+). In terms of biological role, part of the ABC transporter complex CysAWTP involved in sulfate/thiosulfate import. Responsible for energy coupling to the transport system. The polypeptide is Sulfate/thiosulfate import ATP-binding protein CysA (Bacillus cereus (strain ATCC 10987 / NRS 248)).